A 291-amino-acid polypeptide reads, in one-letter code: Ribosomal RNA small subunit methyltransferase A (291 aa).

Residues H21, L23, G48, E70, D95, and N115 each contribute to the S-adenosyl-L-methionine site.

It belongs to the class I-like SAM-binding methyltransferase superfamily. rRNA adenine N(6)-methyltransferase family. RsmA subfamily.

Its subcellular location is the cytoplasm. The enzyme catalyses adenosine(1518)/adenosine(1519) in 16S rRNA + 4 S-adenosyl-L-methionine = N(6)-dimethyladenosine(1518)/N(6)-dimethyladenosine(1519) in 16S rRNA + 4 S-adenosyl-L-homocysteine + 4 H(+). In terms of biological role, specifically dimethylates two adjacent adenosines (A1518 and A1519) in the loop of a conserved hairpin near the 3'-end of 16S rRNA in the 30S particle. May play a critical role in biogenesis of 30S subunits. The polypeptide is Ribosomal RNA small subunit methyltransferase A (Prochlorococcus marinus (strain NATL1A)).